We begin with the raw amino-acid sequence, 85 residues long: Cysteine-rich venom protein 1 (85 aa).

Residues 1 to 21 (MCRYALIVLVVVVVATNLSEA) form the signal peptide. Cystine bridges form between cysteine 29-cysteine 63, cysteine 38-cysteine 59, cysteine 42-cysteine 53, cysteine 46-cysteine 84, and cysteine 65-cysteine 78. Residues 29–84 (CEPNRIYKTCGPACPPTCEDPDPDCNETPQCKAGCFCIPGLIENMKGGNCISPSLC) enclose the TIL domain.

Belongs to the serine protease inhibitor-like (TIL domain-containing) family. As to expression, expressed by the venom gland.

The protein localises to the secreted. In terms of biological role, may be a phenoloxidase inhibitor that stabilizes or inhibits venom phenoloxidase while it is stored in the venom sac. This chain is Cysteine-rich venom protein 1, found in Pimpla hypochondriaca (Parasitoid wasp).